Reading from the N-terminus, the 148-residue chain is Aspartate carbamoyltransferase regulatory chain (148 aa).

Cys-106, Cys-111, Cys-134, and Cys-137 together coordinate Zn(2+).

This sequence belongs to the PyrI family. As to quaternary structure, contains catalytic and regulatory chains. The cofactor is Zn(2+).

Functionally, involved in allosteric regulation of aspartate carbamoyltransferase. In Methanococcus vannielii (strain ATCC 35089 / DSM 1224 / JCM 13029 / OCM 148 / SB), this protein is Aspartate carbamoyltransferase regulatory chain.